The sequence spans 304 residues: Oxidoreductase calM (304 aa).

Residues isoleucine 26, threonine 45, aspartate 68, and asparagine 98 each coordinate NADP(+). Serine 152 acts as the Proton donor in catalysis. NADP(+) contacts are provided by tyrosine 166, lysine 170, valine 200, and threonine 202. Catalysis depends on tyrosine 166, which acts as the Proton acceptor. Lysine 170 acts as the Lowers pKa of active site Tyr in catalysis.

It belongs to the short-chain dehydrogenases/reductases (SDR) family.

It participates in secondary metabolite biosynthesis. Oxidoreductase; part of the gene cluster that mediates the biosynthesis of calbistrin A and related compounds. Calbistrin A is a secondary metabolite with an interesting structure that was recently found to have bioactivity against leukemia cells. It consists of two polyketides linked by an ester bond: a bicyclic decalin containing polyketide and a linear 12 carbon dioic acid structure. The polyketide synthase calA is probably responsible for forming the decalin moiety. Because calA lacks a designated enoylreductase (ER) domain, the required activity is provided by the trans-enoyl reductase calK. Following release from the PKS, calF then probably catalyzes the oxidation and the subsequent Diels Alder cycloisomerization that lead to the formation of the decalin moiety. The decalin polyketide backbone includes two C-methyl groups, at C7 and C11 in backbone, of which the C7 position is probably methylated by the methyltransferase domain of calA. A candidate for adding the methyl group at C11, if not done by CalA, is the cluster methyltransferase calH. Several additional tailoring enzymes within the cluster could be involved in the modification of the decalin polyketide product. Those include the 3 cytochrome P450 monooxygenases CalE, CalG and CalL, of which one might be responsible for the introduction of the extra hydroxyl group attached to the backbone of the decalin moiety, at position C9 in the backbone, that allows for attachment of the linear moiety. One tailoring enzyme activity that is expected to be involved in biosynthesis of calbistrin is an acyltransferase for connecting the two polyketide synthase products, and which could be performed by the cluster acyltransferase calJ. The enzyme responsible for the biosynthesis of the linear moiety, probably a second PKS, has not been identified yet. The sequence is that of Oxidoreductase calM from Penicillium decumbens.